A 390-amino-acid chain; its full sequence is Bibenzyl synthase (390 aa).

The active site involves C164.

Belongs to the thiolase-like superfamily. Chalcone/stilbene synthases family.

It carries out the reaction 3-(3-hydroxyphenyl)-propanoyl-CoA + 3 malonyl-CoA + 3 H(+) = 3,3',5-trihydroxybibenzyl + 4 CO2 + 4 CoA. This chain is Bibenzyl synthase (BIBSY212), found in Phalaenopsis sp. (Moth orchid).